The chain runs to 426 residues: Enolase (426 aa).

Glutamine 162 contributes to the (2R)-2-phosphoglycerate binding site. Glutamate 204 acts as the Proton donor in catalysis. Mg(2+)-binding residues include aspartate 241, glutamate 284, and aspartate 311. (2R)-2-phosphoglycerate is bound by residues lysine 336, arginine 365, serine 366, and lysine 387. Lysine 336 (proton acceptor) is an active-site residue.

This sequence belongs to the enolase family. Requires Mg(2+) as cofactor.

It is found in the cytoplasm. Its subcellular location is the secreted. The protein resides in the cell surface. The catalysed reaction is (2R)-2-phosphoglycerate = phosphoenolpyruvate + H2O. It participates in carbohydrate degradation; glycolysis; pyruvate from D-glyceraldehyde 3-phosphate: step 4/5. Catalyzes the reversible conversion of 2-phosphoglycerate (2-PG) into phosphoenolpyruvate (PEP). It is essential for the degradation of carbohydrates via glycolysis. This chain is Enolase, found in Acidithiobacillus ferrooxidans (strain ATCC 23270 / DSM 14882 / CIP 104768 / NCIMB 8455) (Ferrobacillus ferrooxidans (strain ATCC 23270)).